The primary structure comprises 587 residues: Sulfite reductase [NADPH] hemoprotein beta-component (587 aa).

The segment covering 1–13 (MQSTDNDLSQSPP) has biased composition (polar residues). Residues 1 to 20 (MQSTDNDLSQSPPKLSADEQ) form a disordered region. The [4Fe-4S] cluster site is built by C439, C445, C484, and C488. C488 provides a ligand contact to siroheme.

This sequence belongs to the nitrite and sulfite reductase 4Fe-4S domain family. Alpha(8)-beta(8). The alpha component is a flavoprotein, the beta component is a hemoprotein. Requires siroheme as cofactor. It depends on [4Fe-4S] cluster as a cofactor.

It carries out the reaction hydrogen sulfide + 3 NADP(+) + 3 H2O = sulfite + 3 NADPH + 4 H(+). The protein operates within sulfur metabolism; hydrogen sulfide biosynthesis; hydrogen sulfide from sulfite (NADPH route): step 1/1. Component of the sulfite reductase complex that catalyzes the 6-electron reduction of sulfite to sulfide. This is one of several activities required for the biosynthesis of L-cysteine from sulfate. This chain is Sulfite reductase [NADPH] hemoprotein beta-component, found in Bordetella petrii (strain ATCC BAA-461 / DSM 12804 / CCUG 43448).